The chain runs to 399 residues: Acetate kinase (399 aa).

Asn-9 is a Mg(2+) binding site. Lys-16 provides a ligand contact to ATP. Arg-90 lines the substrate pocket. The active-site Proton donor/acceptor is Asp-147. Residues 207–211, 281–283, and 333–337 each bind ATP; these read HLGNG, DFR, and GVGEN. Position 387 (Glu-387) interacts with Mg(2+).

This sequence belongs to the acetokinase family. In terms of assembly, homodimer. Mg(2+) is required as a cofactor. The cofactor is Mn(2+).

The protein localises to the cytoplasm. It catalyses the reaction acetate + ATP = acetyl phosphate + ADP. It participates in metabolic intermediate biosynthesis; acetyl-CoA biosynthesis; acetyl-CoA from acetate: step 1/2. In terms of biological role, catalyzes the formation of acetyl phosphate from acetate and ATP. Can also catalyze the reverse reaction. The protein is Acetate kinase of Mycobacterium sp. (strain JLS).